We begin with the raw amino-acid sequence, 400 residues long: Nicotinate phosphoribosyltransferase (400 aa).

The residue at position 220 (H220) is a Phosphohistidine; by autocatalysis.

Belongs to the NAPRTase family. Post-translationally, transiently phosphorylated on a His residue during the reaction cycle. Phosphorylation strongly increases the affinity for substrates and increases the rate of nicotinate D-ribonucleotide production. Dephosphorylation regenerates the low-affinity form of the enzyme, leading to product release.

It carries out the reaction nicotinate + 5-phospho-alpha-D-ribose 1-diphosphate + ATP + H2O = nicotinate beta-D-ribonucleotide + ADP + phosphate + diphosphate. It functions in the pathway cofactor biosynthesis; NAD(+) biosynthesis; nicotinate D-ribonucleotide from nicotinate: step 1/1. Its function is as follows. Catalyzes the synthesis of beta-nicotinate D-ribonucleotide from nicotinate and 5-phospho-D-ribose 1-phosphate at the expense of ATP. The chain is Nicotinate phosphoribosyltransferase from Salmonella heidelberg (strain SL476).